Reading from the N-terminus, the 408-residue chain is BTB/POZ and MATH domain-containing protein 3 (408 aa).

The MATH domain maps to 24 to 158; it reads NGSHQFTIQG…DDCLVINCTV (135 aa). The BTB domain maps to 194–261; sequence CDIAFQVGDE…IYTDVLPNVH (68 aa).

The protein belongs to the Tdpoz family. Homodimer or heterodimer with BPM3 and BPM5. Interacts with CUL3A and CUL3B. Interacts with RAP2-4 and RAP2-13. Binds to MYB56 at the promoter of FLOWERING LOCUS T (FT). In terms of tissue distribution, ubiquitous.

The protein resides in the nucleus. It is found in the cytoplasm. It participates in protein modification; protein ubiquitination. May act as a substrate-specific adapter of an E3 ubiquitin-protein ligase complex (CUL3-RBX1-BTB) which mediates the ubiquitination and subsequent proteasomal degradation of target proteins. The chain is BTB/POZ and MATH domain-containing protein 3 from Arabidopsis thaliana (Mouse-ear cress).